Reading from the N-terminus, the 248-residue chain is tRNA (guanine-N(7)-)-methyltransferase (248 aa).

Glutamate 80, glutamate 105, aspartate 132, and aspartate 155 together coordinate S-adenosyl-L-methionine. Residue aspartate 155 is part of the active site. Substrate-binding positions include lysine 159, aspartate 191, and 223-226 (TKFE).

Belongs to the class I-like SAM-binding methyltransferase superfamily. TrmB family.

The catalysed reaction is guanosine(46) in tRNA + S-adenosyl-L-methionine = N(7)-methylguanosine(46) in tRNA + S-adenosyl-L-homocysteine. It functions in the pathway tRNA modification; N(7)-methylguanine-tRNA biosynthesis. In terms of biological role, catalyzes the formation of N(7)-methylguanine at position 46 (m7G46) in tRNA. This chain is tRNA (guanine-N(7)-)-methyltransferase, found in Nocardioides sp. (strain ATCC BAA-499 / JS614).